Reading from the N-terminus, the 61-residue chain is Large ribosomal subunit protein bL28 (61 aa).

It belongs to the bacterial ribosomal protein bL28 family.

The chain is Large ribosomal subunit protein bL28 from Lactobacillus johnsonii (strain CNCM I-12250 / La1 / NCC 533).